The sequence spans 216 residues: MKQDSRFPNLFILDHPLIQHKLTHMRDKDTSTRTFRELLREITLLMGYEITRNLPITTRRVATPLVEVDAPVIAGKKLAIVPVLRAGIGMSDGLLDLVPSARVGHIGVYRADDHRPVEYLVRLPDLEDRVFILCDPMVATGYSAVHAVDVLKRRNVPAANIVFVALVAAPEGVQVFQDAHPDVKLYVASLDSHLNEHAYIVPGLGDAGDRLFGTKN.

Residues R85, R110, and 135 to 143 (DPMVATGYS) contribute to the 5-phospho-alpha-D-ribose 1-diphosphate site. Residues I200 and 205–207 (GDA) contribute to the uracil site. A 5-phospho-alpha-D-ribose 1-diphosphate-binding site is contributed by D206.

Belongs to the UPRTase family. Mg(2+) is required as a cofactor.

The catalysed reaction is UMP + diphosphate = 5-phospho-alpha-D-ribose 1-diphosphate + uracil. It participates in pyrimidine metabolism; UMP biosynthesis via salvage pathway; UMP from uracil: step 1/1. Its activity is regulated as follows. Allosterically activated by GTP. Catalyzes the conversion of uracil and 5-phospho-alpha-D-ribose 1-diphosphate (PRPP) to UMP and diphosphate. This is Uracil phosphoribosyltransferase from Burkholderia vietnamiensis (strain G4 / LMG 22486) (Burkholderia cepacia (strain R1808)).